The sequence spans 115 residues: UPF0738 protein SH1953 (115 aa).

The protein belongs to the UPF0738 family.

This chain is UPF0738 protein SH1953, found in Staphylococcus haemolyticus (strain JCSC1435).